The following is a 441-amino-acid chain: Eukaryotic translation initiation factor 3 subunit M (441 aa).

Positions 196–365 (ESEQAYTYLL…QTFLIHRSTY (170 aa)) constitute a PCI domain. Over residues 405–418 (KEEEANKADNKYDS) the composition is skewed to basic and acidic residues. Positions 405–441 (KEEEANKADNKYDSARGFQRGGQRKQPRALDDDMGLE) are disordered.

Belongs to the eIF-3 subunit M family. As to quaternary structure, component of the eukaryotic translation initiation factor 3 (eIF-3) complex.

It localises to the cytoplasm. Functionally, component of the eukaryotic translation initiation factor 3 (eIF-3) complex, which is involved in protein synthesis of a specialized repertoire of mRNAs and, together with other initiation factors, stimulates binding of mRNA and methionyl-tRNAi to the 40S ribosome. The eIF-3 complex specifically targets and initiates translation of a subset of mRNAs involved in cell proliferation. The protein is Eukaryotic translation initiation factor 3 subunit M of Phaeosphaeria nodorum (strain SN15 / ATCC MYA-4574 / FGSC 10173) (Glume blotch fungus).